We begin with the raw amino-acid sequence, 534 residues long: Probable cytochrome c oxidase subunit 1 (534 aa).

A run of 8 helical transmembrane segments spans residues 35–55 (IMYI…SLLF), 76–96 (VLIT…ALFS), 97–117 (GFGN…FPRL), 120–140 (ISFW…FIDG), 165–185 (VAIF…INLI), 202–222 (PLFV…MPVL), 254–274 (LFWF…FGIV), and 286–306 (IFGY…GFIV). Histidine 81 contributes to the Fe(II)-heme a binding site. The Cu cation site is built by histidine 260 and tyrosine 264. Positions 260-264 (HPEVY) form a cross-link, 1'-histidyl-3'-tyrosine (His-Tyr). Histidine 309 and histidine 310 together coordinate Cu cation. 2 consecutive transmembrane segments (helical) span residues 320 to 340 (ALIY…IKIF) and 357 to 377 (MLFA…GIIL). Histidine 395 is a heme a3 binding site. A run of 3 helical transmembrane segments spans residues 396-416 (FHYT…YYWF), 433-453 (FWIT…LGLA), and 475-495 (IGAG…FYTL). Position 397 (histidine 397) interacts with Fe(II)-heme a.

Belongs to the heme-copper respiratory oxidase family.

It is found in the cell membrane. It catalyses the reaction 4 Fe(II)-[cytochrome c] + O2 + 8 H(+)(in) = 4 Fe(III)-[cytochrome c] + 2 H2O + 4 H(+)(out). The protein operates within energy metabolism; oxidative phosphorylation. Functionally, cytochrome c oxidase is the component of the respiratory chain that catalyzes the reduction of oxygen to water. Subunits 1-3 form the functional core of the enzyme complex. CO I is the catalytic subunit of the enzyme. Electrons originating in cytochrome c are transferred via the copper A center of subunit 2 and heme A of subunit 1 to the bimetallic center formed by heme A3 and copper B. The protein is Probable cytochrome c oxidase subunit 1 (ctaD) of Rickettsia prowazekii (strain Madrid E).